Reading from the N-terminus, the 339-residue chain is Anthranilate phosphoribosyltransferase (339 aa).

Residues Gly80, 83–84, Thr88, 90–93, 108–116, and Ser120 each bind 5-phospho-alpha-D-ribose 1-diphosphate; these read GD, NIST, and KHGNRSVSS. Gly80 contacts anthranilate. Residue Ser92 participates in Mg(2+) binding. Asn111 lines the anthranilate pocket. Arg166 serves as a coordination point for anthranilate. Positions 225 and 226 each coordinate Mg(2+).

This sequence belongs to the anthranilate phosphoribosyltransferase family. As to quaternary structure, homodimer. Requires Mg(2+) as cofactor.

The catalysed reaction is N-(5-phospho-beta-D-ribosyl)anthranilate + diphosphate = 5-phospho-alpha-D-ribose 1-diphosphate + anthranilate. It participates in amino-acid biosynthesis; L-tryptophan biosynthesis; L-tryptophan from chorismate: step 2/5. Catalyzes the transfer of the phosphoribosyl group of 5-phosphorylribose-1-pyrophosphate (PRPP) to anthranilate to yield N-(5'-phosphoribosyl)-anthranilate (PRA). This chain is Anthranilate phosphoribosyltransferase, found in Moorella thermoacetica (strain ATCC 39073 / JCM 9320).